Consider the following 245-residue polypeptide: Ribonuclease 3 (245 aa).

The region spanning 17 to 146 (FTDKMKSLGL…FVGALYLDQG (130 aa)) is the RNase III domain. E59 contacts Mg(2+). D63 is an active-site residue. Residues D132 and E135 each contribute to the Mg(2+) site. The active site involves E135. Residues 172 to 241 (DFKTQFQEYV…AEQAYKLMKN (70 aa)) enclose the DRBM domain.

It belongs to the ribonuclease III family. Homodimer. Mg(2+) serves as cofactor.

The protein resides in the cytoplasm. It catalyses the reaction Endonucleolytic cleavage to 5'-phosphomonoester.. Digests double-stranded RNA. Involved in the processing of primary rRNA transcript to yield the immediate precursors to the large and small rRNAs (23S and 16S). Processes some mRNAs, and tRNAs when they are encoded in the rRNA operon. Processes pre-crRNA and tracrRNA of type II CRISPR loci if present in the organism. The polypeptide is Ribonuclease 3 (Staphylococcus epidermidis (strain ATCC 35984 / DSM 28319 / BCRC 17069 / CCUG 31568 / BM 3577 / RP62A)).